A 113-amino-acid polypeptide reads, in one-letter code: U11-theraphotoxin-Hhn1a (113 aa).

Residues 1 to 21 form the signal peptide; that stretch reads MNTVRVTFLLVFVLAVSLGRA. The propeptide occupies 22-74; the sequence is DKDENRMEMQEKTEQGKSYLDFAENLLLQKLEELEAKLLEEDSEESRNSRQKR. 3 disulfide bridges follow: Cys75–Cys90, Cys82–Cys95, and Cys89–Cys110.

The protein belongs to the neurotoxin 14 (magi-1) family. 01 (HNTX-16) subfamily. Expressed by the venom gland.

The protein localises to the secreted. Its function is as follows. Probable ion channel inhibitor. The protein is U11-theraphotoxin-Hhn1a of Cyriopagopus hainanus (Chinese bird spider).